The sequence spans 362 residues: Biotin synthase (362 aa).

In terms of domain architecture, Radical SAM core spans 46-273; sequence NEVQVSTLLS…ASHVRLSAGR (228 aa). Cys61, Cys65, and Cys68 together coordinate [4Fe-4S] cluster. [2Fe-2S] cluster contacts are provided by Cys105, Cys136, Cys196, and Arg268. Residues 320–339 form a disordered region; sequence PAQRAQKPDQVQEEELLAEV.

It belongs to the radical SAM superfamily. Biotin synthase family. As to quaternary structure, homodimer. [4Fe-4S] cluster is required as a cofactor. [2Fe-2S] cluster serves as cofactor.

The enzyme catalyses (4R,5S)-dethiobiotin + (sulfur carrier)-SH + 2 reduced [2Fe-2S]-[ferredoxin] + 2 S-adenosyl-L-methionine = (sulfur carrier)-H + biotin + 2 5'-deoxyadenosine + 2 L-methionine + 2 oxidized [2Fe-2S]-[ferredoxin]. Its pathway is cofactor biosynthesis; biotin biosynthesis; biotin from 7,8-diaminononanoate: step 2/2. In terms of biological role, catalyzes the conversion of dethiobiotin (DTB) to biotin by the insertion of a sulfur atom into dethiobiotin via a radical-based mechanism. In Aeromonas hydrophila subsp. hydrophila (strain ATCC 7966 / DSM 30187 / BCRC 13018 / CCUG 14551 / JCM 1027 / KCTC 2358 / NCIMB 9240 / NCTC 8049), this protein is Biotin synthase.